The following is a 181-amino-acid chain: Adenylate kinase (181 aa).

7-15 (GVAGVGKTT) serves as a coordination point for ATP.

The protein belongs to the archaeal adenylate kinase family.

The protein resides in the cytoplasm. The catalysed reaction is AMP + ATP = 2 ADP. The polypeptide is Adenylate kinase (adkA) (Thermoplasma volcanium (strain ATCC 51530 / DSM 4299 / JCM 9571 / NBRC 15438 / GSS1)).